Reading from the N-terminus, the 132-residue chain is Pro-MCH 1 (132 aa).

The N-terminal stretch at 1-24 (MRHYVLSISFAVALFLECYTPSTA) is a signal peptide. Cysteines 120 and 129 form a disulfide.

This sequence belongs to the melanin-concentrating hormone family. Pituitary gland. Produced in neurons of lateral basal hypothalamus which project both to the brain and to the neural lobe of the pituitary gland from where MCH is released.

Functionally, plays a role in skin pigmentation by antagonizing the action of melanotropin alpha. Induces melanin concentration within the melanophores. May participate in the control of the hypothalamo-pituitary adrenal gland axis by inhibiting the release of ACTH. The polypeptide is Pro-MCH 1 (mch1) (Oncorhynchus keta (Chum salmon)).